Reading from the N-terminus, the 528-residue chain is Protein MGF 505-7R (528 aa).

ANK repeat units follow at residues 54-83 (SINDALQLAGEEGDTDVVQLLLLWEGNLHY), 129-158 (GCDLICLLQHAVKCDMLSILVKYKEDLLNV), 261-290 (SVKRALSYAVIDNKRKIIDYLVRHENIPRG), 292-321 (IERLLHLAVKKQSSRKTLNLLLSYINYKVK), and 322-352 (NVKKLLEHVVKYNSTLVIRILLEKKKNLLDA).

This sequence belongs to the asfivirus MGF 505 family. Interacts with host STING1. Interacts with host JAK1; this interaction leads to JAK1 degradation. Interacts with host JAK2; this interaction leads to JAK2 degradation. Interacts with host RELA; this interaction inhibits NF-kappa-B promoter activity.

It localises to the host cytoplasm. Plays a role in virus cell tropism, and may be required for efficient virus replication in macrophages. Interferes with host NF-kappa-B promoter activity mediated by TLR8. Mechanistically, inhibits the phosphorylation and subsequent nuclear translocation of host NF-kappa-B RELA subunit downstream of TLR8. Promotes the expression of the autophagy-related protein host ULK1 to degrade host STING and inhibit the interferon response. Inhibits also JAK1- and JAK2-mediated signaling and thus negatively regulates the IFN-gamma signaling. The polypeptide is Protein MGF 505-7R (African swine fever virus (strain Badajoz 1971 Vero-adapted) (Ba71V)).